We begin with the raw amino-acid sequence, 625 residues long: Threonine--tRNA ligase (625 aa).

The segment at 1–147 is editing domain; the sequence is MRILLIHSDY…TIVPGEAKKE (147 aa). A catalytic region spans residues 206–505; the sequence is PHVKIMLEQE…MKKGKKPMYP (300 aa). Zn(2+) contacts are provided by C298, H350, and H474.

The protein belongs to the class-II aminoacyl-tRNA synthetase family. As to quaternary structure, homodimer. Zn(2+) serves as cofactor.

The protein localises to the cytoplasm. It carries out the reaction tRNA(Thr) + L-threonine + ATP = L-threonyl-tRNA(Thr) + AMP + diphosphate + H(+). Catalyzes the attachment of threonine to tRNA(Thr) in a two-step reaction: L-threonine is first activated by ATP to form Thr-AMP and then transferred to the acceptor end of tRNA(Thr). Also edits incorrectly charged L-seryl-tRNA(Thr). The sequence is that of Threonine--tRNA ligase from Thermococcus sibiricus (strain DSM 12597 / MM 739).